The chain runs to 387 residues: Phosphoglycerate kinase (387 aa).

Substrate-binding positions include 21 to 23 (DLN), arginine 36, 60 to 63 (HLGR), arginine 114, and arginine 147. ATP is bound by residues lysine 198, glutamate 313, and 339-342 (GGDT).

It belongs to the phosphoglycerate kinase family. As to quaternary structure, monomer.

It localises to the cytoplasm. The catalysed reaction is (2R)-3-phosphoglycerate + ATP = (2R)-3-phospho-glyceroyl phosphate + ADP. It participates in carbohydrate degradation; glycolysis; pyruvate from D-glyceraldehyde 3-phosphate: step 2/5. The sequence is that of Phosphoglycerate kinase from Baumannia cicadellinicola subsp. Homalodisca coagulata.